The following is a 401-amino-acid chain: Histone acetyltransferase type B subunit 2 (401 aa).

WD repeat units lie at residues 116-147, 158-189, 206-237, 249-280, and 293-324; these read EHEE…FLYS, FHKD…ALWE, LHSD…KIND, KCPQ…YLYD, and GHED…MMWD. An interaction with the histone H4 N-terminus region spans residues 335-339; the sequence is DDAED. The WD 6 repeat unit spans residues 350–381; the sequence is GHRSSVNDFDLNPQIPWLVASAEEENILQVWK.

It belongs to the WD repeat RBAP46/RBAP48/MSI1 family. Component of the HAT-B complex composed of at least HAT1 and HAT2. In the cytoplasm, this complex binds to the histone H4 tail. In the nucleus, the HAT-B complex has an additional component, the histone H3/H4 chaperone HIF1.

The protein localises to the cytoplasm. Its subcellular location is the nucleus. In terms of biological role, regulatory subunit of the histone acetylase B (HAT-B) complex. The complex acetylates 'Lys-12' of histone H4 which is required for telomeric silencing. HAT2 is required for high affinity binding of the acetyltransferase to histone H4, for the nuclear location of HAT1 and for the HAT1-HIF1 interaction. Alone, it is unable to bind to H4, requiring HAT1 for high affinity interaction with the histone tail. HAT2 also has a HAT1 independent function in life-span regulation. This Saccharomyces cerevisiae (strain ATCC 204508 / S288c) (Baker's yeast) protein is Histone acetyltransferase type B subunit 2 (HAT2).